We begin with the raw amino-acid sequence, 578 residues long: Sulfite reductase [NADPH] hemoprotein beta-component (578 aa).

The segment at 1–21 (MTNTLAGPDRSRDISQPLEKL) is disordered. [4Fe-4S] cluster-binding residues include cysteine 443, cysteine 449, cysteine 488, and cysteine 492. Cysteine 492 contributes to the siroheme binding site.

It belongs to the nitrite and sulfite reductase 4Fe-4S domain family. Alpha(8)-beta(8). The alpha component is a flavoprotein, the beta component is a hemoprotein. Requires siroheme as cofactor. [4Fe-4S] cluster is required as a cofactor.

It carries out the reaction hydrogen sulfide + 3 NADP(+) + 3 H2O = sulfite + 3 NADPH + 4 H(+). The protein operates within sulfur metabolism; hydrogen sulfide biosynthesis; hydrogen sulfide from sulfite (NADPH route): step 1/1. Functionally, component of the sulfite reductase complex that catalyzes the 6-electron reduction of sulfite to sulfide. This is one of several activities required for the biosynthesis of L-cysteine from sulfate. The sequence is that of Sulfite reductase [NADPH] hemoprotein beta-component from Methylocella silvestris (strain DSM 15510 / CIP 108128 / LMG 27833 / NCIMB 13906 / BL2).